Consider the following 86-residue polypeptide: Triple QxxK/R motif-containing protein (86 aa).

The helical transmembrane segment at 51–71 (VGLVLAAILALLLAFYAFFYL) threads the bilayer.

The protein belongs to the TRIQK family.

The protein localises to the endoplasmic reticulum membrane. May play a role in cell growth and maintenance of cell morphology. This is Triple QxxK/R motif-containing protein (TRIQK) from Pongo abelii (Sumatran orangutan).